Consider the following 295-residue polypeptide: F-box only protein 8 (295 aa).

An F-box domain is found at 35-80 (TWVARYIPQDLLIEILTRLPPKSVMRFKCVSKFWSSLLSSRYFCNR).

The chain is F-box only protein 8 (FBX8) from Arabidopsis thaliana (Mouse-ear cress).